A 102-amino-acid chain; its full sequence is MANEKIRIRLKSYEHSILDESGAKIVDTAKRTGAEISGPVPLPTERTLFTVLRSPHKNKDSREQFEMRTHKRLIDILNPTPKTVDSLMKLDLPSGVDIEIKL.

It belongs to the universal ribosomal protein uS10 family. As to quaternary structure, part of the 30S ribosomal subunit.

Functionally, involved in the binding of tRNA to the ribosomes. In Lactobacillus delbrueckii subsp. bulgaricus (strain ATCC 11842 / DSM 20081 / BCRC 10696 / JCM 1002 / NBRC 13953 / NCIMB 11778 / NCTC 12712 / WDCM 00102 / Lb 14), this protein is Small ribosomal subunit protein uS10.